A 361-amino-acid polypeptide reads, in one-letter code: Prostaglandin E2 receptor EP2 subtype (361 aa).

Positions 1 to 10 (MGSISNNSGS) are enriched in polar residues. The tract at residues 1–21 (MGSISNNSGSEDCESREWLPS) is disordered. At 1-23 (MGSISNNSGSEDCESREWLPSGE) the chain is on the extracellular side. The N-linked (GlcNAc...) asparagine glycan is linked to Asn-6. A helical membrane pass occupies residues 24 to 47 (SPAISSAMFSAGVLGNLIALALLA). The Cytoplasmic portion of the chain corresponds to 48 to 65 (RRWRGDAGRRAGRGNSIS). The chain crosses the membrane as a helical span at residues 66 to 91 (LFHVLVTELVFTDLLGTCLISPVVLA). At 92 to 111 (SYARNQTLMALEPERRACTY) the chain is on the extracellular side. Asn-96 is a glycosylation site (N-linked (GlcNAc...) asparagine). Cys-109 and Cys-187 are joined by a disulfide. Residues 112 to 132 (FAFAMTFFSLATMLMLFAMAL) traverse the membrane as a helical segment. At 133 to 151 (ERYLSIGRPYFYQRHVTRR) the chain is on the cytoplasmic side. The helical transmembrane segment at 152-176 (GGLAVLPTIYTVSLLFCSLPLLGYG) threads the bilayer. Topologically, residues 177 to 198 (QYVQYCPGTWCFIRHGRTAYLQ) are extracellular. Residues 199-223 (LYATLLLLLIVAVLACNFSVILNLI) form a helical membrane-spanning segment. The Cytoplasmic segment spans residues 224–262 (RMHRRSGRSRCGPSLGSCRDGSGTRRRGERVSVAEETDH). The interval 230 to 253 (GRSRCGPSLGSCRDGSGTRRRGER) is disordered. A helical transmembrane segment spans residues 263-286 (LILLAIMTITFAICSLPFTIFAYM). An N-linked (GlcNAc...) asparagine glycan is attached at Asn-287. Residues 287–299 (NETSSRREKWDLQ) are Extracellular-facing. Residues 300 to 323 (ALRFLSINSIIDPWVFAIFRPPVL) traverse the membrane as a helical segment. Residues 324-361 (RLMRSVLCCRVSLRAQDATQTSCSIQSNASRLTFVDTS) are Cytoplasmic-facing.

It belongs to the G-protein coupled receptor 1 family.

The protein localises to the cell membrane. Receptor for prostaglandin E2 (PGE2). The activity of this receptor is mediated by G(s) proteins that stimulate adenylate cyclase. The subsequent raise in intracellular cAMP is responsible for the relaxing effect of this receptor on smooth muscle. The sequence is that of Prostaglandin E2 receptor EP2 subtype (PTGER2) from Canis lupus familiaris (Dog).